A 325-amino-acid polypeptide reads, in one-letter code: GMP reductase (325 aa).

The Thioimidate intermediate role is filled by Cys174. 203–226 (LIADGGIRTHGDIAKSIRFGASMV) contributes to the NADP(+) binding site.

This sequence belongs to the IMPDH/GMPR family. GuaC type 2 subfamily.

The enzyme catalyses IMP + NH4(+) + NADP(+) = GMP + NADPH + 2 H(+). Its function is as follows. Catalyzes the irreversible NADPH-dependent deamination of GMP to IMP. It functions in the conversion of nucleobase, nucleoside and nucleotide derivatives of G to A nucleotides, and in maintaining the intracellular balance of A and G nucleotides. The chain is GMP reductase from Staphylococcus aureus (strain MRSA252).